A 586-amino-acid chain; its full sequence is Acyl-coenzyme A synthetase ACSM3, mitochondrial (586 aa).

Residues 1 to 27 constitute a mitochondrion transit peptide; it reads MLARVTRKMLRHAKCFQRLAIFGSVRA. Residues lysine 73 and lysine 106 each carry the N6-succinyllysine modification. Residue lysine 157 is modified to N6-acetyllysine. Residues 235 to 243, 374 to 379, aspartate 461, arginine 476, and lysine 572 contribute to the ATP site; these read TSGTSGYPK and EGYGQT.

This sequence belongs to the ATP-dependent AMP-binding enzyme family. Requires Mg(2+) as cofactor. Mn(2+) serves as cofactor.

The protein localises to the mitochondrion. It is found in the mitochondrion matrix. It carries out the reaction a medium-chain fatty acid + ATP + CoA = a medium-chain fatty acyl-CoA + AMP + diphosphate. It catalyses the reaction propanoate + ATP + CoA = propanoyl-CoA + AMP + diphosphate. The catalysed reaction is butanoate + ATP + CoA = butanoyl-CoA + AMP + diphosphate. The enzyme catalyses 2-methylpropanoate + ATP + CoA = 2-methylpropanoyl-CoA + AMP + diphosphate. It carries out the reaction 2-methylbutanoate + ATP + CoA = 2-methylbutanoyl-CoA + AMP + diphosphate. It catalyses the reaction octanoate + ATP + CoA = octanoyl-CoA + AMP + diphosphate. Catalyzes the activation of fatty acids by CoA to produce an acyl-CoA, the first step in fatty acid metabolism. Capable of activating medium-chain fatty acids with a preference for isobutyrate among fatty acids with 2-6 carbon atoms. This is Acyl-coenzyme A synthetase ACSM3, mitochondrial (ACSM3) from Homo sapiens (Human).